The following is a 239-amino-acid chain: Ankyrin repeat domain-containing protein 49 (239 aa).

Position 49 is a phosphoserine (serine 49). ANK repeat units follow at residues 73–103, 107–136, 140–169, and 173–206; these read DPSR…HVNT, DEYT…DVHA, DGWT…DINA, and GLLT…GLKN.

Widely expressed in fetus, at a high level in fetal liver, brain and lung.

The protein resides in the nucleus. Its function is as follows. Induces HBG1 expression. May have a role in spermatogenesis where it promotes autophagy in response to serum starvation, via the NF-kappaB pathway. This Homo sapiens (Human) protein is Ankyrin repeat domain-containing protein 49 (ANKRD49).